The primary structure comprises 144 residues: Bacilliredoxin BC_2157 (144 aa).

The protein belongs to the bacilliredoxin family.

In Bacillus cereus (strain ATCC 14579 / DSM 31 / CCUG 7414 / JCM 2152 / NBRC 15305 / NCIMB 9373 / NCTC 2599 / NRRL B-3711), this protein is Bacilliredoxin BC_2157.